A 397-amino-acid polypeptide reads, in one-letter code: Phosphoglycerate kinase (397 aa).

Substrate contacts are provided by residues 21 to 23 (DMN), Arg-36, 59 to 62 (HLGR), Arg-114, and Arg-147. ATP contacts are provided by residues Lys-198, Glu-320, and 346–349 (GGDT).

It belongs to the phosphoglycerate kinase family. As to quaternary structure, monomer.

The protein localises to the cytoplasm. The catalysed reaction is (2R)-3-phosphoglycerate + ATP = (2R)-3-phospho-glyceroyl phosphate + ADP. It functions in the pathway carbohydrate degradation; glycolysis; pyruvate from D-glyceraldehyde 3-phosphate: step 2/5. The sequence is that of Phosphoglycerate kinase from Neisseria gonorrhoeae (strain NCCP11945).